The primary structure comprises 320 residues: Mycothiol acetyltransferase (320 aa).

N-acetyltransferase domains follow at residues S8–R141 and L152–A320. E36 contacts 1D-myo-inositol 2-(L-cysteinylamino)-2-deoxy-alpha-D-glucopyranoside. Residues L80 to V82 and R88 to T93 contribute to the acetyl-CoA site. E179, K229, and E239 together coordinate 1D-myo-inositol 2-(L-cysteinylamino)-2-deoxy-alpha-D-glucopyranoside. Acetyl-CoA-binding positions include L243–V245 and Q250–R256. Y284 lines the 1D-myo-inositol 2-(L-cysteinylamino)-2-deoxy-alpha-D-glucopyranoside pocket. Residue N289–R294 coordinates acetyl-CoA.

The protein belongs to the acetyltransferase family. MshD subfamily. In terms of assembly, monomer.

The enzyme catalyses 1D-myo-inositol 2-(L-cysteinylamino)-2-deoxy-alpha-D-glucopyranoside + acetyl-CoA = mycothiol + CoA + H(+). Its function is as follows. Catalyzes the transfer of acetyl from acetyl-CoA to desacetylmycothiol (Cys-GlcN-Ins) to form mycothiol. The sequence is that of Mycothiol acetyltransferase from Mycobacterium ulcerans (strain Agy99).